Reading from the N-terminus, the 645-residue chain is Acetyl-coenzyme A synthetase (645 aa).

CoA contacts are provided by residues 190 to 193 (RGGR) and Thr-308. ATP is bound by residues 384–386 (GEP), 408–413 (DTWWQT), Asp-497, and Arg-512. Ser-520 contributes to the CoA binding site. Residue Arg-523 coordinates ATP. Mg(2+) is bound by residues Val-534, His-536, and Val-539. At Lys-606 the chain carries N6-acetyllysine.

It belongs to the ATP-dependent AMP-binding enzyme family. It depends on Mg(2+) as a cofactor. Post-translationally, acetylated. Deacetylation by the SIR2-homolog deacetylase activates the enzyme.

It catalyses the reaction acetate + ATP + CoA = acetyl-CoA + AMP + diphosphate. In terms of biological role, catalyzes the conversion of acetate into acetyl-CoA (AcCoA), an essential intermediate at the junction of anabolic and catabolic pathways. AcsA undergoes a two-step reaction. In the first half reaction, AcsA combines acetate with ATP to form acetyl-adenylate (AcAMP) intermediate. In the second half reaction, it can then transfer the acetyl group from AcAMP to the sulfhydryl group of CoA, forming the product AcCoA. The chain is Acetyl-coenzyme A synthetase from Alkalilimnicola ehrlichii (strain ATCC BAA-1101 / DSM 17681 / MLHE-1).